A 380-amino-acid polypeptide reads, in one-letter code: Erythronate-4-phosphate dehydrogenase (380 aa).

Substrate is bound by residues Ser-45 and Thr-66. Residues Gln-126–Val-127, Asp-146, Thr-174, Ala-205–Arg-207, and Asp-231 contribute to the NAD(+) site. Arg-207 is a catalytic residue. The active site involves Glu-236. Catalysis depends on His-253, which acts as the Proton donor. Residue Gly-256 coordinates NAD(+). Tyr-257 lines the substrate pocket.

The protein belongs to the D-isomer specific 2-hydroxyacid dehydrogenase family. PdxB subfamily. As to quaternary structure, homodimer.

The protein localises to the cytoplasm. It catalyses the reaction 4-phospho-D-erythronate + NAD(+) = (R)-3-hydroxy-2-oxo-4-phosphooxybutanoate + NADH + H(+). Its pathway is cofactor biosynthesis; pyridoxine 5'-phosphate biosynthesis; pyridoxine 5'-phosphate from D-erythrose 4-phosphate: step 2/5. Catalyzes the oxidation of erythronate-4-phosphate to 3-hydroxy-2-oxo-4-phosphonooxybutanoate. The protein is Erythronate-4-phosphate dehydrogenase of Pseudomonas syringae pv. syringae (strain B728a).